The sequence spans 397 residues: uncharacterized protein (397 aa).

The next 10 membrane-spanning stretches (helical) occupy residues 2-24 (LNLL…PGIH), 44-66 (YIPF…SAFL), 92-114 (AIVL…SLFL), 124-143 (AFYC…FILY), 150-169 (SVWE…AVLY), 173-195 (AFNI…INNL), 255-277 (FIVS…VIFI), 297-319 (INTA…LNLS), 331-350 (FKFL…IIGS), and 354-373 (YLIY…LLAV).

It localises to the cell membrane. This is an uncharacterized protein from Methanocaldococcus jannaschii (strain ATCC 43067 / DSM 2661 / JAL-1 / JCM 10045 / NBRC 100440) (Methanococcus jannaschii).